A 106-amino-acid polypeptide reads, in one-letter code: PTS system N,N'-diacetylchitobiose-specific EIIB component (106 aa).

A PTS EIIB type-3 domain is found at 3–106 (KKHIYLFCSA…VAAIKKAAAN (104 aa)). Cys10 functions as the Phosphocysteine intermediate in the catalytic mechanism. Phosphocysteine; by EIIA is present on Cys10.

As to quaternary structure, forms a complex with ChbA (EIIA). ChbB is a monomer in both its unphosphorylated and phosphorylated forms.

The protein localises to the cytoplasm. The catalysed reaction is N,N'-diacetylchitobiose(out) + N(pros)-phospho-L-histidyl-[protein] = diacetylchitobiose-6'-phosphate(in) + L-histidyl-[protein]. The phosphoenolpyruvate-dependent sugar phosphotransferase system (sugar PTS), a major carbohydrate active transport system, catalyzes the phosphorylation of incoming sugar substrates concomitantly with their translocation across the cell membrane. The enzyme II ChbABC PTS system is involved in the transport of the chitin disaccharide N,N'-diacetylchitobiose (GlcNAc2). The sequence is that of PTS system N,N'-diacetylchitobiose-specific EIIB component (chbB) from Escherichia coli O157:H7.